The following is a 322-amino-acid chain: Interferon regulatory factor 1 (322 aa).

Positions 5–113 (RMRMRPWLEM…SAVRVYRMLP (109 aa)) form a DNA-binding region, IRF tryptophan pentad repeat. The residue at position 78 (K78) is an N6-acetyllysine. Residues 92–164 (EEVKDQSRNK…STLPDDHSNY (73 aa)) form a disordered region. Residues 146–157 (DTFSDGLSSSTL) show a composition bias toward polar residues. Glycyl lysine isopeptide (Lys-Gly) (interchain with G-Cter in SUMO) cross-links involve residues K276 and K296.

The protein belongs to the IRF family. In terms of assembly, monomer. Homodimer. Interacts with EP300. Interacts with MYD88. Interacts with PIAS3. Interacts with SPOP. Phosphorylated by CK2 and this positively regulates its activity. Post-translationally, sumoylation represses the transcriptional activity and displays enhanced resistance to protein degradation. Sumoylated by UBE2I/UBC9 and SUMO1. Inactivates the tumor suppressor activity. Elevated levels in tumor cells. Major site is Lys-276. Sumoylation is enhanced by PIAS3. Desumoylated by SENP1 in tumor cells and appears to compete with ubiquitination on C-terminal sites. In terms of processing, ubiquitinated in a SPOP-depedent manner. Appears to compete with sumoylation on C-terminal sites.

Its subcellular location is the nucleus. It is found in the cytoplasm. With respect to regulation, activated by MYD88. Functionally, transcriptional regulator which displays a remarkable functional diversity in the regulation of cellular responses. Regulates transcription of IFN and IFN-inducible genes, host response to viral and bacterial infections, regulation of many genes expressed during hematopoiesis, inflammation, immune responses and cell proliferation and differentiation, regulation of the cell cycle and induction of growth arrest and programmed cell death following DNA damage. Stimulates both innate and acquired immune responses through the activation of specific target genes and can act as a transcriptional activator and repressor regulating target genes by binding to an interferon-stimulated response element (ISRE) in their promoters. Has an essentail role in IFNG-dependent immunity to mycobacteria. Binds to a consensus sequence in gene promoters. Its target genes for transcriptional activation activity include: genes involved in anti-viral response, such as IFN-alpha/beta, RIGI, TNFSF10/TRAIL, ZBP1, OAS1/2, PIAS1/GBP, EIF2AK2/PKR and RSAD2/viperin; antibacterial response, such as GBP2, GBP5 and NOS2/INOS; anti-proliferative response, such as p53/TP53, LOX and CDKN1A; apoptosis, such as BBC3/PUMA, CASP1, CASP7 and CASP8; immune response, such as IL7, IL12A/B and IL15, PTGS2/COX2 and CYBB; DNA damage responses and DNA repair, such as POLQ/POLH; MHC class I expression, such as TAP1, PSMB9/LMP2, PSME1/PA28A, PSME2/PA28B and B2M and MHC class II expression, such as CIITA; metabolic enzymes, such as ACOD1/IRG1. Represses genes involved in anti-proliferative response, such as BIRC5/survivin, CCNB1, CCNE1, CDK1, CDK2 and CDK4 and in immune response, such as FOXP3, IL4, ANXA2 and TLR4. Stimulates p53/TP53-dependent transcription through enhanced recruitment of EP300 leading to increased acetylation of p53/TP53. Plays an important role in immune response directly affecting NK maturation and activity, macrophage production of IL12, Th1 development and maturation of CD8+ T-cells. Also implicated in the differentiation and maturation of dendritic cells and in the suppression of regulatory T (Treg) cells development. Acts as a tumor suppressor and plays a role not only in antagonism of tumor cell growth but also in stimulating an immune response against tumor cells. This is Interferon regulatory factor 1 (IRF1) from Bos taurus (Bovine).